Consider the following 242-residue polypeptide: UPF0246 protein SP70585_1589 (242 aa).

The protein belongs to the UPF0246 family.

The chain is UPF0246 protein SP70585_1589 from Streptococcus pneumoniae (strain 70585).